We begin with the raw amino-acid sequence, 561 residues long: Urocanate hydratase (561 aa).

NAD(+) is bound by residues 52–53 (GG), Gln-130, 176–178 (GMG), Glu-196, Arg-201, 242–243 (NA), 263–267 (QTSAH), 273–274 (YL), and Tyr-322. The active site involves Cys-410. Residue Gly-492 participates in NAD(+) binding.

Belongs to the urocanase family. NAD(+) is required as a cofactor.

It localises to the cytoplasm. It carries out the reaction 4-imidazolone-5-propanoate = trans-urocanate + H2O. The protein operates within amino-acid degradation; L-histidine degradation into L-glutamate; N-formimidoyl-L-glutamate from L-histidine: step 2/3. Functionally, catalyzes the conversion of urocanate to 4-imidazolone-5-propionate. This is Urocanate hydratase from Salmonella typhi.